The primary structure comprises 630 residues: Chaperone protein HtpG (630 aa).

Positions 1–336 are a; substrate-binding; sequence MTTTVEQTAE…TADLPLNVSR (336 aa). Positions 337–551 are b; it reads EMIQESPILA…EDGYDRQMEK (215 aa). The c stretch occupies residues 552–630; that stretch reads ILQNAGRLQG…VFERSVRSEG (79 aa).

It belongs to the heat shock protein 90 family. As to quaternary structure, homodimer.

The protein localises to the cytoplasm. Molecular chaperone. Has ATPase activity. The polypeptide is Chaperone protein HtpG (Rhizobium etli (strain ATCC 51251 / DSM 11541 / JCM 21823 / NBRC 15573 / CFN 42)).